The chain runs to 91 residues: Non-specific lipid-transfer protein 1 (91 aa).

4 cysteine pairs are disulfide-bonded: Cys-4-Cys-51, Cys-14-Cys-28, Cys-29-Cys-74, and Cys-49-Cys-88.

Expressed in seeds (at protein level).

Its function is as follows. Plant non-specific lipid-transfer proteins transfer phospholipids as well as galactolipids across membranes. May play a role in wax or cutin deposition in the cell walls of expanding epidermal cells and certain secretory tissues. Binds to both saturated and unsaturated lipids, with the highest binding efficiency for linoleic acid, followed by linolenic acid. The protein is Non-specific lipid-transfer protein 1 of Foeniculum vulgare (Fennel).